We begin with the raw amino-acid sequence, 215 residues long: Cytochrome b6 (215 aa).

The chain crosses the membrane as a helical span at residues 32–52 (IFYCLGGITLTCFLVQVATGF). Position 35 (cysteine 35) interacts with heme c. Residues histidine 86 and histidine 100 each coordinate heme b. A run of 3 helical transmembrane segments spans residues 90-110 (ASMMVLMMILHVFRVYLTGGF), 116-136 (LTWVTGVVLGVLTASFGVTGY), and 186-206 (LHTFVLPLLTAVFMLMHFLMI). Histidine 187 and histidine 202 together coordinate heme b.

This sequence belongs to the cytochrome b family. PetB subfamily. In terms of assembly, the 4 large subunits of the cytochrome b6-f complex are cytochrome b6, subunit IV (17 kDa polypeptide, PetD), cytochrome f and the Rieske protein, while the 4 small subunits are PetG, PetL, PetM and PetN. The complex functions as a dimer. Requires heme b as cofactor. The cofactor is heme c.

It localises to the plastid. The protein resides in the chloroplast thylakoid membrane. Component of the cytochrome b6-f complex, which mediates electron transfer between photosystem II (PSII) and photosystem I (PSI), cyclic electron flow around PSI, and state transitions. The protein is Cytochrome b6 of Gossypium barbadense (Sea Island cotton).